We begin with the raw amino-acid sequence, 464 residues long: MAPISKVFDYLVIGGGSGGLASARRAAKHGAKVALIEASGRLGGTCVNYGCVPKKIMWNIADLVAKMKTAKQNGFPNSQLGSFDWGMIKRKRDAYIGRLNGIYERNVNKDGVAYISGHASFVSPTEVAVDMNDGSGTQVFSAKYILIAVGGHPIWPSHIPGAEYGIDSDGFFELESQPKRVAIVGAGYIAVELAGVFAALGTETHMFIRQSKFLRKFDPIISDGIMDHFQHIGINVHTNSLEFKKVEKLPSGELCIHQQDGSTFNVDTLLWAIGRAPKIQGLRLEKAGVKTLPNGIIIADTYQRTNVPTVLSLGDVCGKLELTPVAIAAGRRLSDRLFGGIKDAHLDYEEVPSVVFAHPEAGTIGLTEQEAIDKYGESQIKVYNTKFNGLNYSMVEQEDKVPTTYKLVCAGPLQKVVGLHLVGDFSAEILQGFGVAIKMGATKSDFDSCVAIHPTSAEELVTLV.

FAD is bound by residues Ser-17 and Gly-18. Glutathione is bound at residue Ser-17. Arg-24 is a binding site for glutathione. FAD-binding residues include Glu-37, Thr-45, Cys-46, and Lys-54. A disulfide bridge links Cys-46 with Cys-51. Tyr-103 contributes to the glutathione binding site. Ala-119 contacts FAD. The NADP(+) site is built by Ala-186, Ile-189, Glu-192, Arg-209, Arg-215, and Gly-274. Asp-315 is a binding site for FAD. Glu-321 is a binding site for NADP(+). Thr-323 provides a ligand contact to FAD. Arg-331 is a binding site for glutathione. Residue Val-354 participates in NADP(+) binding. His-453 serves as a coordination point for FAD. The active-site Proton acceptor is His-453.

This sequence belongs to the class-I pyridine nucleotide-disulfide oxidoreductase family. Homodimer. The cofactor is FAD.

Its subcellular location is the cytoplasm. It localises to the mitochondrion. It carries out the reaction 2 glutathione + NADP(+) = glutathione disulfide + NADPH + H(+). Functionally, catalyzes the reduction of glutathione disulfide (GSSG) to reduced glutathione (GSH). Constitutes the major mechanism to maintain a high GSH:GSSG ratio in the cytosol. The chain is Glutathione reductase (pgr1) from Schizosaccharomyces pombe (strain 972 / ATCC 24843) (Fission yeast).